The primary structure comprises 215 residues: MKTVLLTGFDPFGGEKINPAWEVAKALHEKEGNGYKVISKQIPTVFHKSIEQLESYIDEFNPELIICIGQAGGRADITVERVAINVDDARIPDNENYQPIDVPIIEDGPVAYWSTLPIKAIVKKLREEGIPASVSQTAGTFVCNHLFYGLMHRLAIKNKSTRGGFVHIPFLPEQASLHANQPSMSLSTIIAGIQLLIEVALQVEKDIVECGGTTH.

Residues Glu80, Cys143, and His167 contribute to the active site.

It belongs to the peptidase C15 family. In terms of assembly, homotetramer.

It localises to the cytoplasm. It carries out the reaction Release of an N-terminal pyroglutamyl group from a polypeptide, the second amino acid generally not being Pro.. Its function is as follows. Removes 5-oxoproline from various penultimate amino acid residues except L-proline. In Bacillus cytotoxicus (strain DSM 22905 / CIP 110041 / 391-98 / NVH 391-98), this protein is Pyrrolidone-carboxylate peptidase.